Here is a 644-residue protein sequence, read N- to C-terminus: Tubulin--tyrosine ligase-like protein 12 (644 aa).

The segment covering 1–13 (MEAERGPERRPAE) has biased composition (basic and acidic residues). The tract at residues 1–25 (MEAERGPERRPAERSSPGQTPEEGA) is disordered. Residues 300 to 644 (PHGHIFKVYT…PGGCHVTCLV (345 aa)) enclose the TTL domain. Residues 450 to 453 (SKYI), Lys468, and Asp470 contribute to the ATP site.

The protein belongs to the tubulin--tyrosine ligase family. As to quaternary structure, interacts with MAVS; the interaction prevents MAVS binding to TBK1 and IKBKE. Interacts (via N-terminus) with TBK1 (via protein kinase domain). Interacts (via TTL domain) with IKBKE (via protein kinase domain). Interacts with tubulin alpha. Interacts with histone H3 and histone H4 (when trimethylated at 'Lys-20' (H4K20me3)). Interacts with CBX3. As to expression, expressed in the basal layer of prostate and endothelial cells. Increased expression in prostatic intraepithelial neoplasia and metastatic lesions.

The protein resides in the cytoplasm. It localises to the midbody. Its subcellular location is the cytoskeleton. It is found in the microtubule organizing center. The protein localises to the centrosome. The protein resides in the spindle. It localises to the nucleus. In terms of biological role, negatively regulates post-translational modifications of tubulin, including detyrosination of the C-terminus and polyglutamylation of glutamate residues. Also, indirectly promotes histone H4 trimethylation at 'Lys-20' (H4K20me3). Probably by controlling tubulin and/or histone H4 post-translational modifications, plays a role in mitosis and in maintaining chromosome number stability. During RNA virus-mediated infection, acts as a negative regulator of the RIG-I pathway by preventing MAVS binding to TBK1 and IKBKE. In Homo sapiens (Human), this protein is Tubulin--tyrosine ligase-like protein 12 (TTLL12).